Here is a 283-residue protein sequence, read N- to C-terminus: BTB/POZ domain-containing protein KCTD15 (283 aa).

The interval 1–33 (MPHRKERPSGSSLNAHGSSGTAEGGNMSRLSLT) is disordered. The segment covering 9-21 (SGSSLNAHGSSGT) has biased composition (polar residues). A phosphoserine mark is found at Ser31, Ser35, and Ser38. The BTB domain maps to 56–126 (APVHIDVGGH…LRTSKLLLPD (71 aa)).

In terms of assembly, forms oligomers, predominantly homopentamers. Interacts with KCTD1, probably forming heteropentamers depending on its abundance in a cell-type dependent manner. Interacts with TFAP2A; this interaction inhibits TFAP2A transcriptional activation. As to expression, expressed in the cerebral cortex, cerebellum, and hypothalamus (at protein level). Expressed in the arcuate hypothalamic nucleus, the ventromedial hypothalamic nucleus and the accumbens nucleus of the ventral striatum.

It is found in the nucleus. Functionally, during embryonic development, interferes with neural crest formation. Inhibits AP2 transcriptional activity by interaction with its activation domain. The polypeptide is BTB/POZ domain-containing protein KCTD15 (Kctd15) (Mus musculus (Mouse)).